The sequence spans 306 residues: Agmatinase (306 aa).

Mn(2+) contacts are provided by His-126, Asp-149, His-151, Asp-153, Asp-230, and Asp-232.

Belongs to the arginase family. Agmatinase subfamily. Mn(2+) is required as a cofactor.

It carries out the reaction agmatine + H2O = urea + putrescine. The protein operates within amine and polyamine biosynthesis; putrescine biosynthesis via agmatine pathway; putrescine from agmatine: step 1/1. Catalyzes the formation of putrescine from agmatine. This chain is Agmatinase, found in Shigella dysenteriae serotype 1 (strain Sd197).